Consider the following 153-residue polypeptide: Peptide methionine sulfoxide reductase B6 (153 aa).

In terms of domain architecture, MsrB spans 28 to 149; that stretch reads NEEWRTVLSP…NSVALKFSSA (122 aa). Zn(2+) contacts are provided by Cys-67, Cys-70, Cys-113, and Cys-116. A disulfide bridge connects residues Cys-85 and Cys-138. Cys-138 (nucleophile) is an active-site residue.

Belongs to the MsrB Met sulfoxide reductase family. Zn(2+) serves as cofactor.

Its subcellular location is the cytoplasm. It localises to the cytosol. It carries out the reaction L-methionyl-[protein] + [thioredoxin]-disulfide + H2O = L-methionyl-(R)-S-oxide-[protein] + [thioredoxin]-dithiol. Functionally, catalyzes the reduction of methionine sulfoxide (MetSO) to methionine in proteins. Plays a protective role against oxidative stress by restoring activity to proteins that have been inactivated by methionine oxidation. MSRB family specifically reduces the MetSO R-enantiomer. The polypeptide is Peptide methionine sulfoxide reductase B6 (MSRB6) (Arabidopsis thaliana (Mouse-ear cress)).